The following is a 373-amino-acid chain: Spermidine/putrescine import ATP-binding protein PotA (373 aa).

The region spanning 11–241 (IELRSLKKSY…PSNLFVAKFI (231 aa)) is the ABC transporter domain. 43-50 (GPSGCGKT) is a binding site for ATP.

Belongs to the ABC transporter superfamily. Spermidine/putrescine importer (TC 3.A.1.11.1) family. The complex is composed of two ATP-binding proteins (PotA), two transmembrane proteins (PotB and PotC) and a solute-binding protein (PotD).

The protein resides in the cell inner membrane. The catalysed reaction is ATP + H2O + polyamine-[polyamine-binding protein]Side 1 = ADP + phosphate + polyamineSide 2 + [polyamine-binding protein]Side 1.. Its function is as follows. Part of the ABC transporter complex PotABCD involved in spermidine/putrescine import. Responsible for energy coupling to the transport system. In Mannheimia succiniciproducens (strain KCTC 0769BP / MBEL55E), this protein is Spermidine/putrescine import ATP-binding protein PotA.